A 129-amino-acid polypeptide reads, in one-letter code: MSHIPSELKYATSHEWIRVEANGEAVVGITEHAQELLGDMVFVDLPEVGKQVGAGDDCAVAESVKAASDIYSPVSGEILAVNEELEGSPELVNSDPYGAGWLFRIKLDDAGELANLLDAEGYQNVVDEE.

One can recognise a Lipoyl-binding domain in the interval 24 to 106; it reads EAVVGITEHA…YGAGWLFRIK (83 aa). K65 carries the N6-lipoyllysine modification.

Belongs to the GcvH family. As to quaternary structure, the glycine cleavage system is composed of four proteins: P, T, L and H. The cofactor is (R)-lipoate.

The glycine cleavage system catalyzes the degradation of glycine. The H protein shuttles the methylamine group of glycine from the P protein to the T protein. The protein is Glycine cleavage system H protein of Aeromonas hydrophila subsp. hydrophila (strain ATCC 7966 / DSM 30187 / BCRC 13018 / CCUG 14551 / JCM 1027 / KCTC 2358 / NCIMB 9240 / NCTC 8049).